Here is a 558-residue protein sequence, read N- to C-terminus: Potassium-transporting ATPase potassium-binding subunit (558 aa).

12 helical membrane passes run 1–21 (MEII…SGYL), 66–86 (FNGF…WLFL), 127–147 (MIVM…VCIA), 166–186 (IVRF…ILLM), 245–265 (IWSN…MLFL), 281–301 (ALIL…LTMW), 327–347 (FGAG…TGSV), 354–374 (LTPL…VFGG), 377–397 (VGLM…SLMV), 416–436 (IVLV…LAFM), 482–502 (ISTG…QLMI), and 531–551 (IVFI…LGPI).

It belongs to the KdpA family. The system is composed of three essential subunits: KdpA, KdpB and KdpC.

It localises to the cell membrane. Its function is as follows. Part of the high-affinity ATP-driven potassium transport (or Kdp) system, which catalyzes the hydrolysis of ATP coupled with the electrogenic transport of potassium into the cytoplasm. This subunit binds the extracellular potassium ions and delivers the ions to the membrane domain of KdpB through an intramembrane tunnel. This Staphylococcus aureus (strain MSSA476) protein is Potassium-transporting ATPase potassium-binding subunit.